The following is a 323-amino-acid chain: D-alanine--D-alanine ligase (323 aa).

Residues 120–319 (LSVLKPYGIK…LEDLFTNAIE (200 aa)) form the ATP-grasp domain. 148 to 203 (VKKVGLPCFVKPNKAGSSFGISKVKSEAELPIAIEVAYKEDNEIIIESFLDGTEVS) contacts ATP. Mg(2+) is bound by residues glutamate 274, glutamate 286, and asparagine 288.

The protein belongs to the D-alanine--D-alanine ligase family. Mg(2+) serves as cofactor. Requires Mn(2+) as cofactor.

It localises to the cytoplasm. It catalyses the reaction 2 D-alanine + ATP = D-alanyl-D-alanine + ADP + phosphate + H(+). It participates in cell wall biogenesis; peptidoglycan biosynthesis. Cell wall formation. This is D-alanine--D-alanine ligase from Flavobacterium johnsoniae (strain ATCC 17061 / DSM 2064 / JCM 8514 / BCRC 14874 / CCUG 350202 / NBRC 14942 / NCIMB 11054 / UW101) (Cytophaga johnsonae).